A 71-amino-acid chain; its full sequence is Large ribosomal subunit protein uL30 (71 aa).

This sequence belongs to the universal ribosomal protein uL30 family. In terms of assembly, part of the 50S ribosomal subunit.

In Mycolicibacterium paratuberculosis (strain ATCC BAA-968 / K-10) (Mycobacterium paratuberculosis), this protein is Large ribosomal subunit protein uL30.